The primary structure comprises 114 residues: Nucleoid-associated protein MAB_0319 (114 aa).

Belongs to the YbaB/EbfC family. Homodimer.

Its subcellular location is the cytoplasm. The protein localises to the nucleoid. Binds to DNA and alters its conformation. May be involved in regulation of gene expression, nucleoid organization and DNA protection. This is Nucleoid-associated protein MAB_0319 from Mycobacteroides abscessus (strain ATCC 19977 / DSM 44196 / CCUG 20993 / CIP 104536 / JCM 13569 / NCTC 13031 / TMC 1543 / L948) (Mycobacterium abscessus).